The chain runs to 319 residues: F-box only protein 8 (319 aa).

Residues 68-111 (FINLEMLPPELSFTILSYLNATDLCLASCVWQDLANDELLWQGL) enclose the F-box domain. The SEC7 domain occupies 146–276 (FNANPDEGVN…LILLSIDLTS (131 aa)).

May promote guanine-nucleotide exchange on an ARF. Promotes the activation of ARF through replacement of GDP with GTP (Potential). The protein is F-box only protein 8 (FBXO8) of Bos taurus (Bovine).